Here is a 343-residue protein sequence, read N- to C-terminus: Probable dual-specificity RNA methyltransferase RlmN (343 aa).

Glu91 functions as the Proton acceptor in the catalytic mechanism. The region spanning 97 to 327 is the Radical SAM core domain; it reads YKHGNSICVS…TTIRREMGSD (231 aa). Cysteines 104 and 332 form a disulfide. Residues Cys111, Cys115, and Cys118 each coordinate [4Fe-4S] cluster. S-adenosyl-L-methionine contacts are provided by residues 158–159, Ser190, 213–215, and Asn289; these read GE and SLH. The S-methylcysteine intermediate role is filled by Cys332.

This sequence belongs to the radical SAM superfamily. RlmN family. [4Fe-4S] cluster serves as cofactor.

Its subcellular location is the cytoplasm. The enzyme catalyses adenosine(2503) in 23S rRNA + 2 reduced [2Fe-2S]-[ferredoxin] + 2 S-adenosyl-L-methionine = 2-methyladenosine(2503) in 23S rRNA + 5'-deoxyadenosine + L-methionine + 2 oxidized [2Fe-2S]-[ferredoxin] + S-adenosyl-L-homocysteine. The catalysed reaction is adenosine(37) in tRNA + 2 reduced [2Fe-2S]-[ferredoxin] + 2 S-adenosyl-L-methionine = 2-methyladenosine(37) in tRNA + 5'-deoxyadenosine + L-methionine + 2 oxidized [2Fe-2S]-[ferredoxin] + S-adenosyl-L-homocysteine. Specifically methylates position 2 of adenine 2503 in 23S rRNA and position 2 of adenine 37 in tRNAs. The polypeptide is Probable dual-specificity RNA methyltransferase RlmN (Clostridium novyi (strain NT)).